The chain runs to 254 residues: Fluoride-specific ion channel FluC 1 (254 aa).

A run of 3 helical transmembrane segments spans residues 19-39, 51-71, and 80-100; these read LDIL…TALY, IIGM…YGSV, and AFLI…VAVL. Na(+) is bound by residues G58 and S61.

This sequence belongs to the fluoride channel Fluc/FEX (TC 1.A.43) family.

The protein localises to the cell inner membrane. The enzyme catalyses fluoride(in) = fluoride(out). With respect to regulation, na(+) is not transported, but it plays an essential structural role and its presence is essential for fluoride channel function. Functionally, fluoride-specific ion channel. Important for reducing fluoride concentration in the cell, thus reducing its toxicity. The sequence is that of Fluoride-specific ion channel FluC 1 from Brucella suis biovar 1 (strain 1330).